The following is a 138-amino-acid chain: MPPKKAAASSAKKGQKTRRREKKNVPHGAAHIKSTFNNTIVSITDPQGNVIAWASSGHVGFKGSRKSTPFAAQLAAENAARKAQEHGVKKVDVFVKGPGSGRETAIRSLQAAGLEVGAIADVTPQPHNGCRPPKRRRV.

Residues 1–12 (MPPKKAAASSAK) show a composition bias toward low complexity. The interval 1 to 28 (MPPKKAAASSAKKGQKTRRREKKNVPHG) is disordered. Residues 13–22 (KGQKTRRREK) show a composition bias toward basic residues.

Belongs to the universal ribosomal protein uS11 family. As to quaternary structure, part of the 30S ribosomal subunit. Interacts with proteins S7 and S18. Binds to IF-3.

Located on the platform of the 30S subunit, it bridges several disparate RNA helices of the 16S rRNA. Forms part of the Shine-Dalgarno cleft in the 70S ribosome. This chain is Small ribosomal subunit protein uS11, found in Mycobacterium sp. (strain JLS).